Reading from the N-terminus, the 341-residue chain is Ras association domain-containing protein 6 (341 aa).

The residue at position 155 (S155) is a Phosphoserine. In terms of domain architecture, Ras-associating spans 190–278 (YDHETSIFTP…ARIFLMDKDA (89 aa)). The SARAH domain occupies 285-332 (VAPYINFHFSFLKSILQRLDEEEKMEIERIMAKFNTERAFILKCLQSK).

In terms of assembly, interacts with MOAP1. Interaction with activated KRAS is still a matter of debate.

Functionally, involved in the induction of apoptosis. May act as a Ras effector protein. May suppress the serum-induced basal levels of NF-kappa-B. The polypeptide is Ras association domain-containing protein 6 (Rassf6) (Rattus norvegicus (Rat)).